Here is a 228-residue protein sequence, read N- to C-terminus: Ephrin-A5 (228 aa).

The signal sequence occupies residues 1 to 20; the sequence is MPHVEMLLLAVAALWVCVRG. Positions 29–162 constitute an Ephrin RBD domain; it reads ADRYAVYWNS…KLKVFVRPAN (134 aa). N-linked (GlcNAc...) asparagine glycosylation occurs at Asn-37. Cystine bridges form between Cys-62–Cys-102 and Cys-90–Cys-151. A lipid anchor (GPI-anchor amidated asparagine) is attached at Asn-203. Residues 204-228 constitute a propeptide, removed in mature form; the sequence is AAQTPRIPIRLLATLLFLLAMLLIL.

It belongs to the ephrin family. In terms of tissue distribution, expressed in a graded fashion across the tectum being more strongly expressed towards the posterior pole.

The protein localises to the cell membrane. Functionally, cell surface GPI-bound ligand for Eph receptors, a family of receptor tyrosine kinases which are crucial for migration, repulsion and adhesion during neuronal, vascular and epithelial development. Binds promiscuously Eph receptors residing on adjacent cells, leading to contact-dependent bidirectional signaling into neighboring cells. Induces compartmentalized signaling within a caveolae-like membrane microdomain when bound to the extracellular domain of its cognate receptor. This signaling event requires the activity of the Fyn tyrosine kinase. Activates the EPHA3 receptor to regulate cell-cell adhesion and cytoskeletal organization. With the receptor EPHA2 may regulate lens fiber cells shape and interactions and be important for lens transparency maintenance. May function actively to stimulate axon fasciculation. Induces growth cone collapse and repulsion of retinal ganglion cell axons. The sequence is that of Ephrin-A5 (EFNA5) from Gallus gallus (Chicken).